The following is a 626-amino-acid chain: uncharacterized protein (626 aa).

This is an uncharacterized protein from Dictyostelium discoideum (Social amoeba).